A 181-amino-acid chain; its full sequence is Acireductone dioxygenase (181 aa).

Residues histidine 97, histidine 99, glutamate 103, and histidine 141 each coordinate Fe(2+). Ni(2+) is bound by residues histidine 97, histidine 99, glutamate 103, and histidine 141.

Belongs to the acireductone dioxygenase (ARD) family. As to quaternary structure, monomer. Fe(2+) is required as a cofactor. Ni(2+) serves as cofactor.

The enzyme catalyses 1,2-dihydroxy-5-(methylsulfanyl)pent-1-en-3-one + O2 = 3-(methylsulfanyl)propanoate + CO + formate + 2 H(+). It catalyses the reaction 1,2-dihydroxy-5-(methylsulfanyl)pent-1-en-3-one + O2 = 4-methylsulfanyl-2-oxobutanoate + formate + 2 H(+). It participates in amino-acid biosynthesis; L-methionine biosynthesis via salvage pathway; L-methionine from S-methyl-5-thio-alpha-D-ribose 1-phosphate: step 5/6. Its function is as follows. Catalyzes 2 different reactions between oxygen and the acireductone 1,2-dihydroxy-3-keto-5-methylthiopentene (DHK-MTPene) depending upon the metal bound in the active site. Fe-containing acireductone dioxygenase (Fe-ARD) produces formate and 2-keto-4-methylthiobutyrate (KMTB), the alpha-ketoacid precursor of methionine in the methionine recycle pathway. Ni-containing acireductone dioxygenase (Ni-ARD) produces methylthiopropionate, carbon monoxide and formate, and does not lie on the methionine recycle pathway. The polypeptide is Acireductone dioxygenase (Pseudomonas paraeruginosa (strain DSM 24068 / PA7) (Pseudomonas aeruginosa (strain PA7))).